The sequence spans 338 residues: Aspartate-semialdehyde dehydrogenase (338 aa).

Residues 13–16 and 41–42 contribute to the NADP(+) site; these read TGAV and RS. Position 101 (Arg101) interacts with phosphate. Catalysis depends on Cys130, which acts as the Acyl-thioester intermediate. Residue Gln157 participates in substrate binding. Position 160–161 (160–161) interacts with NADP(+); it reads SG. Lys214 contributes to the phosphate binding site. Residue Arg236 participates in substrate binding. His243 functions as the Proton acceptor in the catalytic mechanism. Gln316 provides a ligand contact to NADP(+).

It belongs to the aspartate-semialdehyde dehydrogenase family. As to quaternary structure, homodimer.

The enzyme catalyses L-aspartate 4-semialdehyde + phosphate + NADP(+) = 4-phospho-L-aspartate + NADPH + H(+). It functions in the pathway amino-acid biosynthesis; L-lysine biosynthesis via DAP pathway; (S)-tetrahydrodipicolinate from L-aspartate: step 2/4. The protein operates within amino-acid biosynthesis; L-methionine biosynthesis via de novo pathway; L-homoserine from L-aspartate: step 2/3. Its pathway is amino-acid biosynthesis; L-threonine biosynthesis; L-threonine from L-aspartate: step 2/5. In terms of biological role, catalyzes the NADPH-dependent formation of L-aspartate-semialdehyde (L-ASA) by the reductive dephosphorylation of L-aspartyl-4-phosphate. This is Aspartate-semialdehyde dehydrogenase (asd) from Synechocystis sp. (strain ATCC 27184 / PCC 6803 / Kazusa).